The chain runs to 242 residues: Ubiquinone biosynthesis O-methyltransferase (242 aa).

The S-adenosyl-L-methionine site is built by arginine 36, glycine 56, aspartate 77, and methionine 130.

It belongs to the methyltransferase superfamily. UbiG/COQ3 family.

It catalyses the reaction a 3-demethylubiquinol + S-adenosyl-L-methionine = a ubiquinol + S-adenosyl-L-homocysteine + H(+). The enzyme catalyses a 3-(all-trans-polyprenyl)benzene-1,2-diol + S-adenosyl-L-methionine = a 2-methoxy-6-(all-trans-polyprenyl)phenol + S-adenosyl-L-homocysteine + H(+). The protein operates within cofactor biosynthesis; ubiquinone biosynthesis. Its function is as follows. O-methyltransferase that catalyzes the 2 O-methylation steps in the ubiquinone biosynthetic pathway. The chain is Ubiquinone biosynthesis O-methyltransferase from Pasteurella multocida (strain Pm70).